A 143-amino-acid polypeptide reads, in one-letter code: Insulin-like growth factor 1 (143 aa).

Positions Met1–Ala32 are cleaved as a signal peptide. The b stretch occupies residues Gly33 to Thr61. Disulfide bonds link Cys38-Cys80, Cys50-Cys93, and Cys79-Cys84. The interval Gly62–Thr73 is c. An a region spans residues Gly74–Ala94. The tract at residues Pro95 to Ala102 is d. Residues Ala99–Lys143 are disordered. A propeptide spans Arg103 to Lys143 (e peptide). Basic residues predominate over residues Lys126–Gly136.

Belongs to the insulin family. In terms of assembly, forms a ternary complex with IGFR1 and ITGAV:ITGB3. Forms a ternary complex with IGFR1 and ITGA6:ITGB4. Forms a ternary complex with IGFBP3 and ALS.

It is found in the secreted. Its function is as follows. The insulin-like growth factors, isolated from plasma, are structurally and functionally related to insulin but have a much higher growth-promoting activity. May be a physiological regulator of [1-14C]-2-deoxy-D-glucose (2DG) transport and glycogen synthesis in osteoblasts. Stimulates glucose transport in bone-derived osteoblastic (PyMS) cells and is effective at much lower concentrations than insulin, not only regarding glycogen and DNA synthesis but also with regard to enhancing glucose uptake. May play a role in synapse maturation. Ca(2+)-dependent exocytosis of IGF1 is required for sensory perception of smell in the olfactory bulb. Acts as a ligand for IGF1R. Binds to the alpha subunit of IGF1R, leading to the activation of the intrinsic tyrosine kinase activity which autophosphorylates tyrosine residues in the beta subunit thus initiating a cascade of down-stream signaling events leading to activation of the PI3K-AKT/PKB and the Ras-MAPK pathways. Binds to integrins ITGAV:ITGB3 and ITGA6:ITGB4. Its binding to integrins and subsequent ternary complex formation with integrins and IGFR1 are essential for IGF1 signaling. Induces the phosphorylation and activation of IGFR1, MAPK3/ERK1, MAPK1/ERK2 and AKT1. As part of the MAPK/ERK signaling pathway, acts as a negative regulator of apoptosis in cardiomyocytes via promotion of STUB1/CHIP-mediated ubiquitination and degradation of ICER-type isoforms of CREM. The polypeptide is Insulin-like growth factor 1 (Oryctolagus cuniculus (Rabbit)).